An 86-amino-acid polypeptide reads, in one-letter code: Exodeoxyribonuclease 7 small subunit (86 aa).

The interval 1–26 (MQDELFETEKIPPKNTKNTKNAPKKS) is disordered.

Belongs to the XseB family. Heterooligomer composed of large and small subunits.

The protein localises to the cytoplasm. It carries out the reaction Exonucleolytic cleavage in either 5'- to 3'- or 3'- to 5'-direction to yield nucleoside 5'-phosphates.. In terms of biological role, bidirectionally degrades single-stranded DNA into large acid-insoluble oligonucleotides, which are then degraded further into small acid-soluble oligonucleotides. The polypeptide is Exodeoxyribonuclease 7 small subunit (Helicobacter pylori (strain ATCC 700392 / 26695) (Campylobacter pylori)).